A 62-amino-acid chain; its full sequence is UPF0434 protein RHECIAT_CH0004260 (62 aa).

This sequence belongs to the UPF0434 family.

The protein is UPF0434 protein RHECIAT_CH0004260 of Rhizobium etli (strain CIAT 652).